Consider the following 207-residue polypeptide: Histone H1 (207 aa).

Residues 1 to 15 (MAEVAPAPAAAAPAK) show a composition bias toward low complexity. Disordered stretches follow at residues 1–28 (MAEV…PKKA) and 105–207 (EAKK…PKKK). The residue at position 2 (Ala2) is an N-acetylalanine. Basic residues predominate over residues 16 to 27 (APKKKAAAKPKK). The H15 domain maps to 28–101 (AGPSVGELIV…GASGSFKLNK (74 aa)). Composition is skewed to basic residues over residues 117-168 (KAKK…KVKK) and 175-207 (KAAK…PKKK).

Belongs to the histone H1/H5 family. In terms of tissue distribution, oncorhyncin II is expressed in skin.

It localises to the nucleus. The protein localises to the chromosome. Its subcellular location is the secreted. Functionally, histones H1 are necessary for the condensation of nucleosome chains into higher-order structures. Its function is as follows. Oncorhyncin II has antibacterial activity against Gram-positive and Gram-negative bacteria at submicromolar concentrations. Potentially important role in mucosal defense. The chain is Histone H1 from Oncorhynchus mykiss (Rainbow trout).